Consider the following 427-residue polypeptide: Mitochondrial distribution and morphology protein 12 (427 aa).

The SMP-LTD domain occupies 1 to 387 (MSFDINWNQL…WPSWICIDMN (387 aa)). Positions 81-96 (NDSKDEHLKNHGDGIN) are enriched in basic and acidic residues. Disordered stretches follow at residues 81–168 (NDSK…APPL) and 387–427 (NDDD…EAGE). Positions 106–133 (LDDEDEDDEDDDEDDEDEEEEDEDDYDD) are enriched in acidic residues. Polar residues predominate over residues 146-161 (LNFNENSTTPSANSFA). The segment covering 387–402 (NDDDDEEEEEESEDND) has biased composition (acidic residues). Residues 411 to 427 (NDGKHGDGRTDETEAGE) show a composition bias toward basic and acidic residues.

Belongs to the MDM12 family. In terms of assembly, component of the ER-mitochondria encounter structure (ERMES) or MDM complex, composed of MMM1, MDM10, MDM12 and MDM34. An MMM1 homodimer associates with one molecule of MDM12 on each side in a pairwise head-to-tail manner, and the SMP-LTD domains of MMM1 and MDM12 generate a continuous hydrophobic tunnel for phospholipid trafficking.

It is found in the mitochondrion outer membrane. The protein localises to the endoplasmic reticulum membrane. In terms of biological role, component of the ERMES/MDM complex, which serves as a molecular tether to connect the endoplasmic reticulum (ER) and mitochondria. Components of this complex are involved in the control of mitochondrial shape and protein biogenesis, and function in nonvesicular lipid trafficking between the ER and mitochondria. MDM12 is required for the interaction of the ER-resident membrane protein MMM1 and the outer mitochondrial membrane-resident beta-barrel protein MDM10. The MDM12-MMM1 subcomplex functions in the major beta-barrel assembly pathway that is responsible for biogenesis of all mitochondrial outer membrane beta-barrel proteins, and acts in a late step after the SAM complex. The MDM10-MDM12-MMM1 subcomplex further acts in the TOM40-specific pathway after the action of the MDM12-MMM1 complex. Essential for establishing and maintaining the structure of mitochondria and maintenance of mtDNA nucleoids. This chain is Mitochondrial distribution and morphology protein 12, found in Candida albicans (strain WO-1) (Yeast).